Reading from the N-terminus, the 179-residue chain is Large ribosomal subunit protein uL5 (179 aa).

The protein belongs to the universal ribosomal protein uL5 family. Part of the 50S ribosomal subunit; part of the 5S rRNA/L5/L18/L25 subcomplex. Contacts the 5S rRNA and the P site tRNA. Forms a bridge to the 30S subunit in the 70S ribosome.

Its function is as follows. This is one of the proteins that bind and probably mediate the attachment of the 5S RNA into the large ribosomal subunit, where it forms part of the central protuberance. In the 70S ribosome it contacts protein S13 of the 30S subunit (bridge B1b), connecting the 2 subunits; this bridge is implicated in subunit movement. Contacts the P site tRNA; the 5S rRNA and some of its associated proteins might help stabilize positioning of ribosome-bound tRNAs. This Desulforapulum autotrophicum (strain ATCC 43914 / DSM 3382 / VKM B-1955 / HRM2) (Desulfobacterium autotrophicum) protein is Large ribosomal subunit protein uL5.